A 150-amino-acid polypeptide reads, in one-letter code: 16 kDa phloem protein 1 (150 aa).

One can recognise a C2 domain in the interval 1–108 (MGMGMMEVHL…LAEGVRKGKS (108 aa)). The Ca(2+) site is built by Asp20, Asp27, Asp78, Asp80, and Asp86.

Requires Ca(2+) as cofactor. Sieve elements of leaves, stems, roots and flowers.

Binds to both sense and antisense RNA. Interacts with mesophyll plasmodesmata to mediate its own cell-to-cell transport and potentiate RNA trafficking. This is 16 kDa phloem protein 1 (PP16-1) from Cucurbita maxima (Pumpkin).